Consider the following 131-residue polypeptide: Gem-associated protein 7 (131 aa).

The residue at position 1 (M1) is an N-acetylmethionine. Residues 1–29 (MQTPVNIPVPVLRLPRGPDGFSRGFAPDG) enclose the SUZ-C domain. Residue T3 is modified to Phosphothreonine. Positions 65–131 (RYLRSLLAMV…SDIISYTFKP (67 aa)) constitute a Sm domain.

The protein belongs to the gemin-7 family. In terms of assembly, part of the core SMN complex that contains SMN1, GEMIN2/SIP1, DDX20/GEMIN3, GEMIN4, GEMIN5, GEMIN6, GEMIN7, GEMIN8 and STRAP/UNRIP. Part of the SMN-Sm complex that contains SMN1, GEMIN2/SIP1, DDX20/GEMIN3, GEMIN4, GEMIN5, GEMIN6, GEMIN7, GEMIN8, STRAP/UNRIP and the Sm proteins SNRPB, SNRPD1, SNRPD2, SNRPD3, SNRPE, SNRPF and SNRPG. Interacts with GEMIN6; the interaction is direct. Interacts with STRAP/UNRIP; the interaction is direct. Interacts with GEMIN8; the interaction is direct. Interacts with SNRPB, SNRPD2, SNRPD3 and SNRPE; the interaction is direct.

The protein resides in the nucleus. It localises to the nucleoplasm. It is found in the gem. The protein localises to the cytoplasm. The SMN complex catalyzes the assembly of small nuclear ribonucleoproteins (snRNPs), the building blocks of the spliceosome, and thereby plays an important role in the splicing of cellular pre-mRNAs. Most spliceosomal snRNPs contain a common set of Sm proteins SNRPB, SNRPD1, SNRPD2, SNRPD3, SNRPE, SNRPF and SNRPG that assemble in a heptameric protein ring on the Sm site of the small nuclear RNA to form the core snRNP (Sm core). In the cytosol, the Sm proteins SNRPD1, SNRPD2, SNRPE, SNRPF and SNRPG are trapped in an inactive 6S pICln-Sm complex by the chaperone CLNS1A that controls the assembly of the core snRNP. To assemble core snRNPs, the SMN complex accepts the trapped 5Sm proteins from CLNS1A forming an intermediate. Binding of snRNA inside 5Sm triggers eviction of the SMN complex, thereby allowing binding of SNRPD3 and SNRPB to complete assembly of the core snRNP. This Homo sapiens (Human) protein is Gem-associated protein 7 (GEMIN7).